A 633-amino-acid polypeptide reads, in one-letter code: Glutamyl-tRNA(Gln) amidotransferase subunit E (633 aa).

Belongs to the GatB/GatE family. GatE subfamily. Heterodimer of GatD and GatE.

It catalyses the reaction L-glutamyl-tRNA(Gln) + L-glutamine + ATP + H2O = L-glutaminyl-tRNA(Gln) + L-glutamate + ADP + phosphate + H(+). Its function is as follows. Allows the formation of correctly charged Gln-tRNA(Gln) through the transamidation of misacylated Glu-tRNA(Gln) in organisms which lack glutaminyl-tRNA synthetase. The reaction takes place in the presence of glutamine and ATP through an activated gamma-phospho-Glu-tRNA(Gln). The GatDE system is specific for glutamate and does not act on aspartate. The polypeptide is Glutamyl-tRNA(Gln) amidotransferase subunit E (Methanococcus vannielii (strain ATCC 35089 / DSM 1224 / JCM 13029 / OCM 148 / SB)).